Reading from the N-terminus, the 239-residue chain is MNSNTQPASGNFHQSELDKFAALANRWWDADGPQKPLHALNPVRLDYVSARLDLAGARVLDVGCGGGLLSESMARLGAQVTAIDLAPELVKVARLHGLESSVQVDYRVQSVEDLAAEQTGSFDAVTCMEMLEHVPDPTAIIRACARLLKPGGKLFLSTLNRTPAAFALAVVGAEYIARLLPRGTHHYKDFIKPAELAAWLRNAELQLEDVSGMLYEPWRNRARLSSRTEVNYLAYAVKP.

S-adenosyl-L-methionine-binding residues include arginine 44, glycine 63, aspartate 84, and methionine 128.

It belongs to the methyltransferase superfamily. UbiG/COQ3 family.

The catalysed reaction is a 3-demethylubiquinol + S-adenosyl-L-methionine = a ubiquinol + S-adenosyl-L-homocysteine + H(+). The enzyme catalyses a 3-(all-trans-polyprenyl)benzene-1,2-diol + S-adenosyl-L-methionine = a 2-methoxy-6-(all-trans-polyprenyl)phenol + S-adenosyl-L-homocysteine + H(+). It functions in the pathway cofactor biosynthesis; ubiquinone biosynthesis. In terms of biological role, O-methyltransferase that catalyzes the 2 O-methylation steps in the ubiquinone biosynthetic pathway. This Xanthomonas oryzae pv. oryzae (strain MAFF 311018) protein is Ubiquinone biosynthesis O-methyltransferase.